Here is a 422-residue protein sequence, read N- to C-terminus: AP-1 complex subunit mu-1-I (422 aa).

The region spanning 167–420 is the MHD domain; sequence KNEVFLDVIE…ITQNGEYEMR (254 aa).

The protein belongs to the adaptor complexes medium subunit family. In terms of assembly, adaptor protein complex 1 (AP-1) is a heterotetramer composed of two large adaptins (gamma- and beta'-type subunits), a medium adaptin (mu-type subunit AP47) and a small adaptin (sigma-type subunit AP19). Interacts (via N-terminus) with kvs-4. Expressed in the cholinergic motor neuron DA9.

The protein localises to the golgi apparatus. Its subcellular location is the cytoplasmic vesicle. It localises to the clathrin-coated vesicle membrane. It is found in the cell projection. The protein resides in the dendrite. Its function is as follows. Component of the adaptor complexes which link clathrin to receptors in coated vesicles. Clathrin-associated protein complexes are believed to interact with the cytoplasmic tails of membrane proteins, leading to their selection and concentration. Required for many aspects of development and behavior, including negative regulation of vulval differentiation. Required for the dendritic localization of potassium channel kvs-4 in the cholinergic motor neuron DA9. The chain is AP-1 complex subunit mu-1-I (unc-101) from Caenorhabditis elegans.